The primary structure comprises 217 residues: N-(5'-phosphoribosyl)anthranilate isomerase (217 aa).

It belongs to the TrpF family.

It carries out the reaction N-(5-phospho-beta-D-ribosyl)anthranilate = 1-(2-carboxyphenylamino)-1-deoxy-D-ribulose 5-phosphate. It participates in amino-acid biosynthesis; L-tryptophan biosynthesis; L-tryptophan from chorismate: step 3/5. This chain is N-(5'-phosphoribosyl)anthranilate isomerase, found in Chlorobium chlorochromatii (strain CaD3).